Consider the following 283-residue polypeptide: Non-selective voltage-gated ion channel VDAC3 (283 aa).

Cys2 is subject to N-acetylcysteine. Phosphothreonine is present on Thr4. 3 positions are modified to N6-acetyllysine: Lys12, Lys15, and Lys20. Transmembrane regions (beta stranded) follow at residues 26 to 35 (MVKIDLKTKS) and 39 to 47 (VEFSTSGHA). Thr33 bears the Phosphothreonine mark. Lys53 participates in a covalent cross-link: Glycyl lysine isopeptide (Lys-Gly) (interchain with G-Cter in ubiquitin). 3 beta stranded membrane passes run 54–64 (ASGNLETKYKV), 69–76 (LIFTQKWN), and 80–89 (TLGTEISWEN). N6-acetyllysine is present on Lys90. Residues 95 to 104 (LKLTVDTIFV) traverse the membrane as a beta stranded segment. Residues Lys109 and Lys110 each participate in a glycyl lysine isopeptide (Lys-Gly) (interchain with G-Cter in ubiquitin) cross-link. 10 consecutive transmembrane segments (beta stranded) span residues 111–120 (SGKLKASYRR), 123–130 (FSVGSKVD), 137–145 (TIYGWAVLA), 150–158 (LAGYQMSFD), 163–175 (KLCQ…GYKA), 178–185 (FQLHTHVN), 189–198 (EFGGSIYQRV), 202–211 (IETSINLAWT), 218–227 (RFGIAAKYRL), and 231–238 (TSLSAKVN). A Phosphoserine modification is found at Ser241. NAD(+)-binding positions include 242–244 (LIG) and 260–264 (SALVD). A run of 2 beta stranded transmembrane segments spans residues 242–251 (LIGLGYTQSL) and 254–263 (GVKLTLSALV). An N6-acetyllysine; alternate modification is found at Lys266. A Glycyl lysine isopeptide (Lys-Gly) (interchain with G-Cter in ubiquitin); alternate cross-link involves residue Lys266. Residues 273-282 (HKVGLGFELE) traverse the membrane as a beta stranded segment.

This sequence belongs to the eukaryotic mitochondrial porin family. Interacts with ARMC12 in a TBC1D21-dependent manner. Interacts with MISFA. In terms of processing, ubiquitinated by PRKN during mitophagy, leading to its degradation and enhancement of mitophagy. Deubiquitinated by USP30. As to expression, isoform 1 is widely expressed with strong expression in atrium and ascitic tumor, lower levels in brain and very low levels in liver and kidney. Isoform 2 is also widely expressed with highest levels in brain but no expression in kidney. Also expressed in flagella of epididymal sperm.

It is found in the mitochondrion outer membrane. The protein resides in the membrane. The catalysed reaction is chloride(in) = chloride(out). It carries out the reaction K(+)(in) = K(+)(out). Non-selective voltage-gated ion channel that mediates the transport of anions and cations through the mitochondrion outer membrane and plasma membrane. Forms a high-conducting channel with a stable open state and a voltage-induced closure with a mild preference for anions over cations. Involved in male fertility and sperm mitochondrial sheath formation. This is Non-selective voltage-gated ion channel VDAC3 from Rattus norvegicus (Rat).